A 250-amino-acid polypeptide reads, in one-letter code: NADH-quinone oxidoreductase subunit B 2 (250 aa).

The [4Fe-4S] cluster site is built by C41, C42, C107, and C137.

The protein belongs to the complex I 20 kDa subunit family. In terms of assembly, NDH-1 is composed of 14 different subunits. Subunits NuoB, C, D, E, F, and G constitute the peripheral sector of the complex. The cofactor is [4Fe-4S] cluster.

It localises to the cell membrane. It carries out the reaction a quinone + NADH + 5 H(+)(in) = a quinol + NAD(+) + 4 H(+)(out). NDH-1 shuttles electrons from NADH, via FMN and iron-sulfur (Fe-S) centers, to quinones in the respiratory chain. The immediate electron acceptor for the enzyme in this species is believed to be ubiquinone. Couples the redox reaction to proton translocation (for every two electrons transferred, four hydrogen ions are translocated across the cytoplasmic membrane), and thus conserves the redox energy in a proton gradient. This chain is NADH-quinone oxidoreductase subunit B 2, found in Herpetosiphon aurantiacus (strain ATCC 23779 / DSM 785 / 114-95).